The sequence spans 211 residues: Large ribosomal subunit protein uL4 (211 aa).

Residues 42–73 (NNRQGTHSTKDRSEVRGGGIKPWAQKGTGRAR) are disordered.

It belongs to the universal ribosomal protein uL4 family. In terms of assembly, part of the 50S ribosomal subunit.

One of the primary rRNA binding proteins, this protein initially binds near the 5'-end of the 23S rRNA. It is important during the early stages of 50S assembly. It makes multiple contacts with different domains of the 23S rRNA in the assembled 50S subunit and ribosome. In terms of biological role, forms part of the polypeptide exit tunnel. This is Large ribosomal subunit protein uL4 from Leptospira biflexa serovar Patoc (strain Patoc 1 / Ames).